The following is a 227-amino-acid chain: Ashwin (227 aa).

The segment covering 71–84 (LPRSRWGKRMEKSR) has biased composition (basic and acidic residues). The segment at 71–227 (LPRSRWGKRM…KKKIQHITWP (157 aa)) is disordered. Low complexity predominate over residues 88–98 (SSSSTHSSSTD). Residues 153 to 173 (GASTNCSSSNFSNRTPVSSSG) show a composition bias toward polar residues. Residues 178–191 (SPSNHSNSSVHSNN) are compositionally biased toward low complexity. Over residues 204 to 219 (GEPDTAKDIKSPETKK) the composition is skewed to basic and acidic residues.

Belongs to the ashwin family.

The protein localises to the nucleus. The polypeptide is Ashwin (Danio rerio (Zebrafish)).